Reading from the N-terminus, the 1093-residue chain is Isoleucine--tRNA ligase, chloroplastic/mitochondrial (1093 aa).

The disordered stretch occupies residues 69–103; it reads PNNEFGHSSKRRSRGPVMAAKKASEGEKQEDGKYK. Residues 90-103 show a composition bias toward basic and acidic residues; it reads KASEGEKQEDGKYK. The 'HIGH' region signature appears at 155–165; the sequence is PYANGDLHMGH. Glu-682 contributes to the L-isoleucyl-5'-AMP binding site. Residues 723–727 carry the 'KMSKS' region motif; the sequence is KMSKS. Lys-726 provides a ligand contact to ATP. Residues Cys-1050, Cys-1053, Cys-1070, and Cys-1073 each coordinate Zn(2+).

This sequence belongs to the class-I aminoacyl-tRNA synthetase family.

The protein localises to the plastid. It localises to the chloroplast. Its subcellular location is the mitochondrion. The enzyme catalyses tRNA(Ile) + L-isoleucine + ATP = L-isoleucyl-tRNA(Ile) + AMP + diphosphate. The polypeptide is Isoleucine--tRNA ligase, chloroplastic/mitochondrial (Arabidopsis thaliana (Mouse-ear cress)).